The chain runs to 581 residues: Fibrous sheath-interacting protein 1 (581 aa).

Residues 1 to 77 (MDIIKGNLDG…SNDDKQESCS (77 aa)) form a disordered region. Residues 14-30 (PASNSRIRPGSRSSNAS) show a composition bias toward polar residues. Residues 52-77 (GKEDHSESSNTENRRTSNDDKQESCS) are compositionally biased toward basic and acidic residues. Phosphoserine is present on S87. Positions 105–153 (EPKLKELDSQLQDAIQKMKKLDKILAKKQRREKEIKKQGLEMRIKLWEE) form a coiled coil. Disordered regions lie at residues 338–365 (SSFS…VTPG) and 555–581 (HLKL…CKEP). 2 stretches are compositionally biased toward basic and acidic residues: residues 344–360 (LENR…ERNM) and 569–581 (QETK…CKEP).

It belongs to the FSIP1 family.

The polypeptide is Fibrous sheath-interacting protein 1 (FSIP1) (Homo sapiens (Human)).